A 220-amino-acid chain; its full sequence is A-type ATP synthase subunit K (220 aa).

6 helical membrane-spanning segments follow: residues 5-25 (LILG…GSGI), 63-83 (FLVA…AMFA), 90-110 (LAGL…GAVA), 125-145 (LPET…VGVF), 155-175 (AALG…GQGI), and 195-215 (LVLA…AILI).

This sequence belongs to the V-ATPase proteolipid subunit family. The A-type ATPase is composed of subunits A(3), B(3), C, D, E(1 or 2), F, H(2), I and K(x). Subunit K dimerizes and may form higher oligomers.

Its subcellular location is the cell membrane. In terms of biological role, component of the A-type ATP synthase that produces ATP from ADP in the presence of a proton gradient across the membrane. The chain is A-type ATP synthase subunit K from Methanocaldococcus jannaschii (strain ATCC 43067 / DSM 2661 / JAL-1 / JCM 10045 / NBRC 100440) (Methanococcus jannaschii).